Here is a 318-residue protein sequence, read N- to C-terminus: NADH-ubiquinone oxidoreductase chain 1 (318 aa).

The next 8 helical transmembrane spans lie at 3-23 (LINL…LTLL), 69-89 (MLFI…WTPL), 102-122 (MLFI…SGWA), 144-164 (VTLA…TLLS), 171-191 (YIWL…STLA), 222-242 (LFFL…IILF), 253-273 (ELYT…FLWI), and 294-314 (LPLT…LAGI).

This sequence belongs to the complex I subunit 1 family. As to quaternary structure, core subunit of respiratory chain NADH dehydrogenase (Complex I) which is composed of 45 different subunits.

The protein localises to the mitochondrion inner membrane. It catalyses the reaction a ubiquinone + NADH + 5 H(+)(in) = a ubiquinol + NAD(+) + 4 H(+)(out). Its function is as follows. Core subunit of the mitochondrial membrane respiratory chain NADH dehydrogenase (Complex I) which catalyzes electron transfer from NADH through the respiratory chain, using ubiquinone as an electron acceptor. Essential for the catalytic activity and assembly of complex I. In Murina suilla (Brown tube-nosed bat), this protein is NADH-ubiquinone oxidoreductase chain 1 (MT-ND1).